A 123-amino-acid polypeptide reads, in one-letter code: MPTIEQLVRKGRQAKPKKSKTLALKGSPLRRGVCTRVYTTTPKKPNSALRKVARVRLSSGIEVTAYIPGEGHNLQEHSIVLVRGGRVKDLPGVRYHIVRGALDTQGVKDRKQGRSLYGAKKAK.

Residues 1-21 (MPTIEQLVRKGRQAKPKKSKT) form a disordered region. The segment covering 9–20 (RKGRQAKPKKSK) has biased composition (basic residues).

This sequence belongs to the universal ribosomal protein uS12 family. In terms of assembly, part of the 30S ribosomal subunit. Contacts proteins S8 and S17. May interact with IF1 in the 30S initiation complex.

Functionally, with S4 and S5 plays an important role in translational accuracy. Its function is as follows. Interacts with and stabilizes bases of the 16S rRNA that are involved in tRNA selection in the A site and with the mRNA backbone. Located at the interface of the 30S and 50S subunits, it traverses the body of the 30S subunit contacting proteins on the other side and probably holding the rRNA structure together. The combined cluster of proteins S8, S12 and S17 appears to hold together the shoulder and platform of the 30S subunit. The polypeptide is Small ribosomal subunit protein uS12 (Bifidobacterium longum (strain NCC 2705)).